The following is a 276-amino-acid chain: MGYIDDEVKRLQGVIANLEGRVQALETKQFGPSSQKKTVEEVRAILIGPPGAGKGTQAPRLKEKFNCCHLATGDMLRSQVAKKTPLGQAAKKIMDAGGLVSDEIVIGMIKEELDNNKECKGGFILDGFPRTVPQAEGLDKMLRERNQTLQHAVELKIDDELLVARITGRLVHPASGRSYHVKFNPPKKEMTDDITGEPLIQRSDDNADALKKRLETYHKQTTPVVNYYQKTGIWKAIDASQEPGQVWKSLLAIFDGDKSKASKAGSTILSKLTHSS.

Residue 51–56 (GAGKGT) participates in ATP binding. The NMP stretch occupies residues 71–100 (ATGDMLRSQVAKKTPLGQAAKKIMDAGGLV). AMP-binding positions include T72, R77, 98–100 (GLV), 127–130 (GFPR), and Q134. The segment at 168-205 (GRLVHPASGRSYHVKFNPPKKEMTDDITGEPLIQRSDD) is LID. Residues R169 and 178–179 (SY) contribute to the ATP site. AMP contacts are provided by R202 and R213. Residue Q241 coordinates ATP.

This sequence belongs to the adenylate kinase family. AK2 subfamily. Monomer.

Its subcellular location is the cytoplasm. It localises to the cytosol. The protein resides in the mitochondrion intermembrane space. It carries out the reaction AMP + ATP = 2 ADP. In terms of biological role, catalyzes the reversible transfer of the terminal phosphate group between ATP and AMP. Plays an important role in cellular energy homeostasis and in adenine nucleotide metabolism. Adenylate kinase activity is critical for regulation of the phosphate utilization and the AMP de novo biosynthesis pathways. The chain is Adenylate kinase from Podospora anserina (strain S / ATCC MYA-4624 / DSM 980 / FGSC 10383) (Pleurage anserina).